Consider the following 422-residue polypeptide: MGLIAYFDCPTGISGDMCLGALVSAGVPLEYLMEKLAPLGLTDEYRLTAGLVQKQGQAATKVEVKLLNDHHSHGPGHHGMRHLPEIEQLIKQANLPARVSRWSLAIFHQLAIAEGEVHGIEPEAVHFHEVGATDAIVDIVGTCLGLDYLGIDQCYWSALPTGSGTVRAAHGDLPVPVPAVLKLWQTRQVPVYDNGLTGELVTPTGAAIAVTLASQFGPKPPLNLHKVGLGAGSKDFPLANILRLWIGTEITPHNHPLSSEAPFGQLETITVLETQLDDIQPQAVGYLLESLLHQGAIDVFTQAIAMKKSRPGILLTVLCAPENQNHCLNLLFRETTSLGVRVRQQQRYALEREWQTVVIPHGPIRIKVAYGYQAGKKIILNAHPEFADCAALAKATGQPWQLIHQQAIGAWSNLNKELSPES.

The protein belongs to the LarC family.

This Synechocystis sp. (strain ATCC 27184 / PCC 6803 / Kazusa) protein is Putative nickel insertion protein.